Reading from the N-terminus, the 269-residue chain is Tryptophan synthase alpha chain (269 aa).

Residues Glu49 and Asp60 each act as proton acceptor in the active site.

Belongs to the TrpA family. In terms of assembly, tetramer of two alpha and two beta chains.

It catalyses the reaction (1S,2R)-1-C-(indol-3-yl)glycerol 3-phosphate + L-serine = D-glyceraldehyde 3-phosphate + L-tryptophan + H2O. The protein operates within amino-acid biosynthesis; L-tryptophan biosynthesis; L-tryptophan from chorismate: step 5/5. The alpha subunit is responsible for the aldol cleavage of indoleglycerol phosphate to indole and glyceraldehyde 3-phosphate. This chain is Tryptophan synthase alpha chain, found in Stutzerimonas stutzeri (strain A1501) (Pseudomonas stutzeri).